The following is a 125-amino-acid chain: Ribonuclease P protein component (125 aa).

This sequence belongs to the RnpA family. In terms of assembly, consists of a catalytic RNA component (M1 or rnpB) and a protein subunit.

It carries out the reaction Endonucleolytic cleavage of RNA, removing 5'-extranucleotides from tRNA precursor.. Its function is as follows. RNaseP catalyzes the removal of the 5'-leader sequence from pre-tRNA to produce the mature 5'-terminus. It can also cleave other RNA substrates such as 4.5S RNA. The protein component plays an auxiliary but essential role in vivo by binding to the 5'-leader sequence and broadening the substrate specificity of the ribozyme. The sequence is that of Ribonuclease P protein component from Rhodococcus opacus (strain B4).